The chain runs to 101 residues: MNNTEFSKIAETTIAYIADKIEEQDKEASIDVDLQGDILNLDTDKGIYVINKQSAAKEIWLSSPVSGPYHFFYEQGKWKNKIGLELMAILTEELNIKFDNI.

Belongs to the frataxin family.

Functionally, involved in iron-sulfur (Fe-S) cluster assembly. May act as a regulator of Fe-S biogenesis. This chain is Iron-sulfur cluster assembly protein CyaY, found in Rickettsia felis (strain ATCC VR-1525 / URRWXCal2) (Rickettsia azadi).